The sequence spans 510 residues: 2-isopropylmalate synthase (510 aa).

Residues 5–267 (LVIFDTTLRD…DTRIDTTQIV (263 aa)) enclose the Pyruvate carboxyltransferase domain. Mn(2+) contacts are provided by Asp14, His202, His204, and Asn238. A regulatory domain region spans residues 392 to 510 (RLLSLVAHSE…SSLERTHPQV (119 aa)).

Belongs to the alpha-IPM synthase/homocitrate synthase family. LeuA type 1 subfamily. As to quaternary structure, homodimer. Mn(2+) serves as cofactor.

It localises to the cytoplasm. The catalysed reaction is 3-methyl-2-oxobutanoate + acetyl-CoA + H2O = (2S)-2-isopropylmalate + CoA + H(+). Its pathway is amino-acid biosynthesis; L-leucine biosynthesis; L-leucine from 3-methyl-2-oxobutanoate: step 1/4. In terms of biological role, catalyzes the condensation of the acetyl group of acetyl-CoA with 3-methyl-2-oxobutanoate (2-ketoisovalerate) to form 3-carboxy-3-hydroxy-4-methylpentanoate (2-isopropylmalate). The chain is 2-isopropylmalate synthase from Nitrosomonas eutropha (strain DSM 101675 / C91 / Nm57).